The chain runs to 177 residues: Large ribosomal subunit protein uL6 (177 aa).

Basic and acidic residues predominate over residues 152-171 (RPPEPYKGKGVRYDDEEVRR). Positions 152–177 (RPPEPYKGKGVRYDDEEVRRKEAKKK) are disordered.

This sequence belongs to the universal ribosomal protein uL6 family. In terms of assembly, part of the 50S ribosomal subunit.

Its function is as follows. This protein binds to the 23S rRNA, and is important in its secondary structure. It is located near the subunit interface in the base of the L7/L12 stalk, and near the tRNA binding site of the peptidyltransferase center. This Shewanella putrefaciens (strain CN-32 / ATCC BAA-453) protein is Large ribosomal subunit protein uL6.